The sequence spans 382 residues: Lipid-A-disaccharide synthase (382 aa).

The protein belongs to the LpxB family.

The catalysed reaction is 2-N,3-O-bis[(3R)-3-hydroxytetradecanoyl]-alpha-D-glucosaminyl 1-phosphate + UDP-2-N,3-O-bis[(3R)-3-hydroxytetradecanoyl]-alpha-D-glucosamine = lipid A disaccharide (E. coli) + UDP + H(+). It catalyses the reaction a lipid X + a UDP-2-N,3-O-bis[(3R)-3-hydroxyacyl]-alpha-D-glucosamine = a lipid A disaccharide + UDP + H(+). It participates in glycolipid biosynthesis; lipid IV(A) biosynthesis; lipid IV(A) from (3R)-3-hydroxytetradecanoyl-[acyl-carrier-protein] and UDP-N-acetyl-alpha-D-glucosamine: step 5/6. Its function is as follows. Condensation of UDP-2,3-diacylglucosamine and 2,3-diacylglucosamine-1-phosphate to form lipid A disaccharide, a precursor of lipid A, a phosphorylated glycolipid that anchors the lipopolysaccharide to the outer membrane of the cell. The polypeptide is Lipid-A-disaccharide synthase (Salmonella agona (strain SL483)).